The chain runs to 391 residues: Serine acetyltransferase 3, mitochondrial (391 aa).

2 disordered regions span residues 40–82 and 353–375; these read KHHT…HDDE and VGNP…IPGL. Over residues 45–56 the composition is skewed to pro residues; it reads SPPPSPPPPPPM.

It belongs to the transferase hexapeptide repeat family. Homomultimer. Interacts with OASC. Component of the cysteine synthase complex (CSC) composed of two OAS-TL dimers and one SAT hexamer. As to expression, ubiquitous with higher levels in leaves and siliques. Localized in vascular tissues, particularly in phloem.

It is found in the mitochondrion. The enzyme catalyses L-serine + acetyl-CoA = O-acetyl-L-serine + CoA. The protein operates within amino-acid biosynthesis; L-cysteine biosynthesis; L-cysteine from L-serine: step 1/2. This chain is Serine acetyltransferase 3, mitochondrial (SAT3), found in Arabidopsis thaliana (Mouse-ear cress).